The following is a 351-amino-acid chain: Polyribonucleotide 5'-hydroxyl-kinase TK1956 (351 aa).

ATP is bound at residue 34–41 (GGVDSGKS).

Requires a divalent metal cation as cofactor.

It catalyses the reaction a 5'-end dephospho-2'-deoxyribonucleoside-DNA + ATP = a 5'-end 5'-phospho-2'-deoxyribonucleoside-DNA + ADP + H(+). The enzyme catalyses a 5'-end dephospho-ribonucleoside-RNA + ATP = a 5'-end 5'-phospho-ribonucleoside-RNA + ADP + H(+). Polynucleotide kinase that can phosphorylate the 5'-hydroxyl groups of both single-stranded RNA (ssRNA) and single-stranded DNA (ssDNA). Exhibits a strong preference for ssRNA. The protein is Polyribonucleotide 5'-hydroxyl-kinase TK1956 of Thermococcus kodakarensis (strain ATCC BAA-918 / JCM 12380 / KOD1) (Pyrococcus kodakaraensis (strain KOD1)).